A 366-amino-acid polypeptide reads, in one-letter code: Protein FAM110B (366 aa).

Disordered stretches follow at residues 127 to 152, 163 to 182, and 216 to 252; these read SSEG…DTTD, KVYP…HVSR, and CSSS…RPSL. Serine 234 and serine 297 each carry phosphoserine. The disordered stretch occupies residues 313 to 333; sequence DCEQSQDSNSDLRNDDSANDR. A compositionally biased stretch (basic and acidic residues) spans 322 to 331; the sequence is SDLRNDDSAN.

Belongs to the FAM110 family.

It localises to the cytoplasm. The protein resides in the cytoskeleton. Its subcellular location is the microtubule organizing center. It is found in the centrosome. The polypeptide is Protein FAM110B (Fam110b) (Mus musculus (Mouse)).